The primary structure comprises 291 residues: Small ribosomal subunit protein uS2 (291 aa).

This sequence belongs to the universal ribosomal protein uS2 family.

The protein is Small ribosomal subunit protein uS2 of Orientia tsutsugamushi (strain Boryong) (Rickettsia tsutsugamushi).